Reading from the N-terminus, the 321-residue chain is Solute carrier family 25 member 33 (321 aa).

Solcar repeat units follow at residues 9–118 (ENTL…AKEQ), 126–213 (NSNI…LKKY), and 231–315 (TNFF…IVYL). The next 6 membrane-spanning stretches (helical) occupy residues 12-32 (LLHL…TCPL), 49-65 (VYYP…AGVV), 121-141 (GVFV…AAFV), 190-210 (LTAS…YESL), 233-253 (FFGL…VAYP), and 298-318 (QIPN…LLED).

The protein belongs to the mitochondrial carrier (TC 2.A.29) family.

The protein resides in the mitochondrion inner membrane. It catalyses the reaction UTP(in) + UDP(out) = UTP(out) + UDP(in). It carries out the reaction dUTP(out) + UTP(in) = dUTP(in) + UTP(out). The enzyme catalyses 5-methyl-UTP(out) + UTP(in) = 5-methyl-UTP(in) + UTP(out). The catalysed reaction is 5-methyl-UDP(out) + UTP(in) = 5-methyl-UDP(in) + UTP(out). It catalyses the reaction UTP(in) + CTP(out) = UTP(out) + CTP(in). It carries out the reaction CDP(out) + UTP(in) = CDP(in) + UTP(out). The enzyme catalyses dCTP(out) + UTP(in) = dCTP(in) + UTP(out). The catalysed reaction is dCDP(out) + UTP(in) = dCDP(in) + UTP(out). It catalyses the reaction UTP(in) + GTP(out) = UTP(out) + GTP(in). It carries out the reaction UTP(in) + GDP(out) = UTP(out) + GDP(in). The enzyme catalyses dGTP(out) + UTP(in) = dGTP(in) + UTP(out). The catalysed reaction is dGDP(out) + UTP(in) = dGDP(in) + UTP(out). It catalyses the reaction ITP(out) + UTP(in) = ITP(in) + UTP(out). Mitochondrial transporter that imports/exports pyrimidine nucleotides into and from mitochondria. Selectively transports uridine, thymidine, guanosine, cytosine and inosine (deoxy)nucleoside di- and triphosphates by an antiport mechanism. May import (deoxy)nucleoside triphosphates in exchange for intramitochondrial (deoxy)nucleoside diphosphates, thus providing precursors necessary for de novo synthesis of mitochondrial DNA and RNA while exporting products of their catabolism. Participates in mitochondrial genome maintenance, regulation of mitochondrial membrane potential and mitochondrial respiration. Upon INS or IGF1 stimulation regulates cell growth and proliferation by controlling mitochondrial DNA replication and transcription, the ratio of mitochondria-to nuclear-encoded components of the electron transport chain resulting in control of mitochondrial ROS production. Participates in dendritic cell endocytosis and may associate with mitochondrial oxidative phosphorylation. The sequence is that of Solute carrier family 25 member 33 (SLC25A33) from Bos taurus (Bovine).